Here is an 87-residue protein sequence, read N- to C-terminus: Putative regulatory protein ABC2323 (87 aa).

The protein belongs to the RemA family.

The protein is Putative regulatory protein ABC2323 of Shouchella clausii (strain KSM-K16) (Alkalihalobacillus clausii).